The chain runs to 93 residues: Pyrimidine/purine nucleoside phosphorylase (93 aa).

Belongs to the nucleoside phosphorylase PpnP family.

It catalyses the reaction a purine D-ribonucleoside + phosphate = a purine nucleobase + alpha-D-ribose 1-phosphate. It carries out the reaction adenosine + phosphate = alpha-D-ribose 1-phosphate + adenine. The enzyme catalyses cytidine + phosphate = cytosine + alpha-D-ribose 1-phosphate. The catalysed reaction is guanosine + phosphate = alpha-D-ribose 1-phosphate + guanine. It catalyses the reaction inosine + phosphate = alpha-D-ribose 1-phosphate + hypoxanthine. It carries out the reaction thymidine + phosphate = 2-deoxy-alpha-D-ribose 1-phosphate + thymine. The enzyme catalyses uridine + phosphate = alpha-D-ribose 1-phosphate + uracil. The catalysed reaction is xanthosine + phosphate = alpha-D-ribose 1-phosphate + xanthine. Functionally, catalyzes the phosphorolysis of diverse nucleosides, yielding D-ribose 1-phosphate and the respective free bases. Can use uridine, adenosine, guanosine, cytidine, thymidine, inosine and xanthosine as substrates. Also catalyzes the reverse reactions. The polypeptide is Pyrimidine/purine nucleoside phosphorylase (Pseudomonas savastanoi pv. phaseolicola (strain 1448A / Race 6) (Pseudomonas syringae pv. phaseolicola (strain 1448A / Race 6))).